We begin with the raw amino-acid sequence, 102 residues long: uncharacterized protein (102 aa).

A helical membrane pass occupies residues 7 to 23 (IVFVSCVILGLAACSSQ).

It localises to the membrane. This is an uncharacterized protein from Haemophilus influenzae (strain ATCC 51907 / DSM 11121 / KW20 / Rd).